A 77-amino-acid chain; its full sequence is Translation initiation factor IF-1, chloroplastic (77 aa).

The region spanning 1 to 71 (MKEQKLIHEG…TRGRIIYRLR (71 aa)) is the S1-like domain.

Belongs to the IF-1 family. As to quaternary structure, component of the 30S ribosomal translation pre-initiation complex which assembles on the 30S ribosome in the order IF-2 and IF-3, IF-1 and N-formylmethionyl-tRNA(fMet); mRNA recruitment can occur at any time during PIC assembly.

The protein localises to the plastid. It is found in the chloroplast. Its function is as follows. One of the essential components for the initiation of protein synthesis. Stabilizes the binding of IF-2 and IF-3 on the 30S subunit to which N-formylmethionyl-tRNA(fMet) subsequently binds. Helps modulate mRNA selection, yielding the 30S pre-initiation complex (PIC). Upon addition of the 50S ribosomal subunit IF-1, IF-2 and IF-3 are released leaving the mature 70S translation initiation complex. The protein is Translation initiation factor IF-1, chloroplastic of Calycanthus floridus var. glaucus (Eastern sweetshrub).